We begin with the raw amino-acid sequence, 263 residues long: Thymidylate kinase (263 aa).

The transit peptide at 1 to 51 (MKRICSVSSVQLFSRSFRALASPRSLNYPLQCIKRSSVRMESSNFSSGVRT) directs the protein to the mitochondrion. 66 to 74 (GLDRSGKST) is a binding site for ATP.

Belongs to the thymidylate kinase family. Expressed in root, rosette leaves, flower buds, flowers and siliques.

The protein localises to the mitochondrion. It is found in the cytoplasm. Its subcellular location is the nucleus. The protein resides in the nucleoplasm. It carries out the reaction dTMP + ATP = dTDP + ADP. Its pathway is pyrimidine metabolism; dTTP biosynthesis. In terms of biological role, catalyzes the conversion of dTMP to dTDP. Involved in the regulation of DNA replication. Is essential to promote the first division of the zygote. The chain is Thymidylate kinase from Arabidopsis thaliana (Mouse-ear cress).